We begin with the raw amino-acid sequence, 602 residues long: Beta-(1--&gt;2)glucan export ATP-binding/permease protein NdvA (602 aa).

One can recognise an ABC transmembrane type-1 domain in the interval 21-306; that stretch reads GWLLAFANLL…VVSFINNVFM (286 aa). Transmembrane regions (helical) follow at residues 22-42, 63-83, 141-161, 163-183, 240-262, and 280-300; these read WLLA…PVLF, FLAA…LVAL, EHFA…YLNW, LAIL…FVVR, VLSW…VLAI, and IVMF…VVSF. Positions 340–573 constitute an ABC transporter domain; the sequence is VEFNDVTFSY…GGHFAELARA (234 aa). Residue 373 to 380 coordinates ATP; the sequence is GPTGAGKS.

Belongs to the ABC transporter superfamily. Beta-(1--&gt;2)glucan exporter (TC 3.A.1.108.1) family. Homodimer.

The protein resides in the cell inner membrane. The catalysed reaction is [(1-&gt;2)-beta-D-glucosyl](n)(in) + ATP + H2O = [(1-&gt;2)-beta-D-glucosyl](n)(out) + ADP + phosphate + H(+). Its function is as follows. Involved in beta-(1--&gt;2)glucan export. Transmembrane domains (TMD) form a pore in the inner membrane and the ATP-binding domain (NBD) is responsible for energy generation. This chain is Beta-(1--&gt;2)glucan export ATP-binding/permease protein NdvA, found in Bradyrhizobium diazoefficiens (strain JCM 10833 / BCRC 13528 / IAM 13628 / NBRC 14792 / USDA 110).